We begin with the raw amino-acid sequence, 155 residues long: Transcriptional repressor NrdR (155 aa).

Residues 3-34 fold into a zinc finger; the sequence is CPFCSHFESKVVDSRPTDEGQAIRRRRECVSC. In terms of domain architecture, ATP-cone spans 49–139; that stretch reads LIVVKKSGNR…VYREFKDINT (91 aa).

The protein belongs to the NrdR family. Zn(2+) serves as cofactor.

Negatively regulates transcription of bacterial ribonucleotide reductase nrd genes and operons by binding to NrdR-boxes. This chain is Transcriptional repressor NrdR, found in Alkaliphilus metalliredigens (strain QYMF).